A 180-amino-acid chain; its full sequence is PLASMODESMATA CALLOSE-BINDING PROTEIN 5 (180 aa).

Positions 1–29 (MIMSLPQCSHLRLSILAATAAMLMVITTA) are cleaved as a signal peptide. An intrachain disulfide couples Cys-42 to Cys-105. Positions 126–151 (PSSKGANNGRLADDTSMGAGQADMSR) are disordered. The GPI-anchor amidated serine moiety is linked to residue Ser-157. Residues 158-180 (SSWMVTFIGFGSLLTMTWIIHHL) constitute a propeptide, removed in mature form.

In terms of processing, contains two additional disulfide bonds.

It is found in the cell membrane. It localises to the cell junction. The protein localises to the plasmodesma. The sequence is that of PLASMODESMATA CALLOSE-BINDING PROTEIN 5 (PDCB5) from Arabidopsis thaliana (Mouse-ear cress).